The chain runs to 596 residues: Arginine--tRNA ligase (596 aa).

The 'HIGH' region signature appears at 128 to 138 (ANPTSSLHVGH).

It belongs to the class-I aminoacyl-tRNA synthetase family. As to quaternary structure, monomer.

The protein localises to the cytoplasm. The catalysed reaction is tRNA(Arg) + L-arginine + ATP = L-arginyl-tRNA(Arg) + AMP + diphosphate. The chain is Arginine--tRNA ligase from Acinetobacter baumannii (strain AB307-0294).